A 578-amino-acid chain; its full sequence is Sulfite reductase [NADPH] hemoprotein beta-component (578 aa).

[4Fe-4S] cluster is bound by residues C441, C447, C487, and C491. Residue C491 participates in siroheme binding.

It belongs to the nitrite and sulfite reductase 4Fe-4S domain family. As to quaternary structure, alpha(8)-beta(8). The alpha component is a flavoprotein, the beta component is a hemoprotein. It depends on siroheme as a cofactor. [4Fe-4S] cluster serves as cofactor.

It catalyses the reaction hydrogen sulfide + 3 NADP(+) + 3 H2O = sulfite + 3 NADPH + 4 H(+). The protein operates within sulfur metabolism; hydrogen sulfide biosynthesis; hydrogen sulfide from sulfite (NADPH route): step 1/1. In terms of biological role, component of the sulfite reductase complex that catalyzes the 6-electron reduction of sulfite to sulfide. This is one of several activities required for the biosynthesis of L-cysteine from sulfate. This is Sulfite reductase [NADPH] hemoprotein beta-component from Vibrio vulnificus (strain YJ016).